A 165-amino-acid polypeptide reads, in one-letter code: 6,7-dimethyl-8-ribityllumazine synthase (165 aa).

Residues tryptophan 26, 58–60 (SIE), and 80–82 (VVI) each bind 5-amino-6-(D-ribitylamino)uracil. (2S)-2-hydroxy-3-oxobutyl phosphate is bound at residue 85–86 (GT). The Proton donor role is filled by histidine 88. Residue asparagine 113 participates in 5-amino-6-(D-ribitylamino)uracil binding. (2S)-2-hydroxy-3-oxobutyl phosphate is bound at residue arginine 127.

It belongs to the DMRL synthase family.

It catalyses the reaction (2S)-2-hydroxy-3-oxobutyl phosphate + 5-amino-6-(D-ribitylamino)uracil = 6,7-dimethyl-8-(1-D-ribityl)lumazine + phosphate + 2 H2O + H(+). Its pathway is cofactor biosynthesis; riboflavin biosynthesis; riboflavin from 2-hydroxy-3-oxobutyl phosphate and 5-amino-6-(D-ribitylamino)uracil: step 1/2. In terms of biological role, catalyzes the formation of 6,7-dimethyl-8-ribityllumazine by condensation of 5-amino-6-(D-ribitylamino)uracil with 3,4-dihydroxy-2-butanone 4-phosphate. This is the penultimate step in the biosynthesis of riboflavin. The sequence is that of 6,7-dimethyl-8-ribityllumazine synthase from Saccharopolyspora erythraea (strain ATCC 11635 / DSM 40517 / JCM 4748 / NBRC 13426 / NCIMB 8594 / NRRL 2338).